A 179-amino-acid polypeptide reads, in one-letter code: Putative endogenous retrovirus group FC1 Env polyprotein (179 aa).

The N-terminal stretch at 1 to 22 (MARPSPLCLLLLLTLLPPIVPS) is a signal peptide. The truncated surface protein stretch occupies residues 23 to 179 (NSLLTEPPFR…SKLRIFRTYV (157 aa)). An N-linked (GlcNAc...) asparagine glycan is attached at asparagine 69.

It belongs to the gamma type-C retroviral envelope protein family. HERV class-I F(c)1 env subfamily.

Its subcellular location is the virion. Its function is as follows. Retroviral envelope proteins mediate receptor recognition and membrane fusion during early infection. Endogenous envelope proteins may have kept, lost or modified their original function during evolution. The chain is Putative endogenous retrovirus group FC1 Env polyprotein (ERVFC1) from Gorilla gorilla gorilla (Western lowland gorilla).